A 95-amino-acid polypeptide reads, in one-letter code: UPF0223 protein Bsph_1378 (95 aa).

The protein belongs to the UPF0223 family.

This chain is UPF0223 protein Bsph_1378, found in Lysinibacillus sphaericus (strain C3-41).